Here is a 536-residue protein sequence, read N- to C-terminus: Phosphoenolpyruvate carboxykinase (ATP) (536 aa).

Arg-61, Tyr-195, and Lys-201 together coordinate substrate. ATP contacts are provided by residues Lys-201, His-220, and Gly-236–Thr-244. Mn(2+)-binding residues include Lys-201 and His-220. Position 257 (Asp-257) interacts with Mn(2+). Positions 285, 323, and 448 each coordinate ATP. Arg-323 contacts substrate.

The protein belongs to the phosphoenolpyruvate carboxykinase (ATP) family. It depends on Mn(2+) as a cofactor.

Its subcellular location is the cytoplasm. The catalysed reaction is oxaloacetate + ATP = phosphoenolpyruvate + ADP + CO2. The protein operates within carbohydrate biosynthesis; gluconeogenesis. In terms of biological role, involved in the gluconeogenesis. Catalyzes the conversion of oxaloacetate (OAA) to phosphoenolpyruvate (PEP) through direct phosphoryl transfer between the nucleoside triphosphate and OAA. The chain is Phosphoenolpyruvate carboxykinase (ATP) from Methylobacterium nodulans (strain LMG 21967 / CNCM I-2342 / ORS 2060).